A 606-amino-acid chain; its full sequence is UvrABC system protein C (606 aa).

One can recognise a GIY-YIG domain in the interval 18–96; that stretch reads SQPGVYRMMN…IKSLNPRYNI (79 aa). One can recognise a UVR domain in the interval 205–240; the sequence is TEVLKSITRKMHEAAEEQEYEQAALFRDQIQSLRKI.

The protein belongs to the UvrC family. Interacts with UvrB in an incision complex.

Its subcellular location is the cytoplasm. The UvrABC repair system catalyzes the recognition and processing of DNA lesions. UvrC both incises the 5' and 3' sides of the lesion. The N-terminal half is responsible for the 3' incision and the C-terminal half is responsible for the 5' incision. This chain is UvrABC system protein C, found in Nitrosospira multiformis (strain ATCC 25196 / NCIMB 11849 / C 71).